The chain runs to 143 residues: Small ribosomal subunit protein uS11c (143 aa).

The protein belongs to the universal ribosomal protein uS11 family. Part of the 30S ribosomal subunit.

It localises to the plastid. The protein resides in the chloroplast. The polypeptide is Small ribosomal subunit protein uS11c (Zea mays (Maize)).